Here is a 456-residue protein sequence, read N- to C-terminus: MFS-type transporter SLC18B1 (456 aa).

An N-acetylmethionine modification is found at Met-1. The disordered stretch occupies residues 1 to 24 (MEALGDLEGPRAPGGDDPAGSAGE). Topologically, residues 1–33 (MEALGDLEGPRAPGGDDPAGSAGETPGWLSREQ) are cytoplasmic. Residues 10–23 (PRAPGGDDPAGSAG) show a composition bias toward low complexity. Ser-21 is subject to Phosphoserine. A helical membrane pass occupies residues 34–54 (VFVLISAASVNLGSMMCYSIL). The Extracellular segment spans residues 55 to 70 (GPFFPKEAEKKGASNT). The chain crosses the membrane as a helical span at residues 71 to 91 (IIGMIFGCFALFELLASLVFG). Over 92-100 (NYLVHIGAK) the chain is Cytoplasmic. Residues 101-121 (FMFVAGMFVSGGVTILFGVLD) form a helical membrane-spanning segment. Residues 122 to 127 (RVPDGP) are Extracellular-facing. Residues 128 to 148 (VFIAMCFLVRVMDAVSFAAAM) traverse the membrane as a helical segment. The Cytoplasmic segment spans residues 149–161 (TASSSILAKAFPN). Residues 162–184 (NVATVLGSLETFSGLGLILGPPV) traverse the membrane as a helical segment. The Extracellular segment spans residues 185 to 195 (GGFLYQSFGYE). The chain crosses the membrane as a helical span at residues 196 to 216 (VPFIVLGCVVLLMVPLNMYIL). Over 217-230 (PNYESDPGEHSFWK) the chain is Cytoplasmic. A helical membrane pass occupies residues 231–251 (LIALPKVGLIAFVINSLSSCF). The Extracellular portion of the chain corresponds to 252–272 (GFLDPTLSLFVLEKFNLPAGY). Residues 273–293 (VGLVFLGMALSYAISSPLFGL) form a helical membrane-spanning segment. Residues 294–304 (LSDKRPPLRKW) lie on the Cytoplasmic side of the membrane. Residues 305–325 (LLVFGNLITAGCYMLLGPVPI) form a helical membrane-spanning segment. The Extracellular portion of the chain corresponds to 326–331 (LHIKSQ). The chain crosses the membrane as a helical span at residues 332 to 352 (LWLLVLILVVSGLSAGMSIIP). Residues 353-377 (TFPEILSCAHENGFEEGLSTLGLVS) lie on the Cytoplasmic side of the membrane. Residues 378–398 (GLFSAMWSIGAFMGPTLGGFL) form a helical membrane-spanning segment. Residues 399–407 (YEKIGFEWA) lie on the Extracellular side of the membrane. A helical membrane pass occupies residues 408–428 (AAIQGLWALISGLAMGLFYLL). Topologically, residues 429-456 (EYSRRKRSKSQNILSTEEERTTLLPNET) are cytoplasmic. Ser-438 bears the Phosphoserine mark.

It belongs to the major facilitator superfamily. Expressed in various tissues including lung, placenta, adrenal gland, liver, testis, and brain.

The protein localises to the cytoplasmic vesicle. It localises to the secretory vesicle membrane. Its subcellular location is the secretory vesicle. The protein resides in the synaptic vesicle membrane. The enzyme catalyses spermine(in) + n H(+)(out) = spermine(out) + n H(+)(in). It carries out the reaction spermidine(in) + n H(+)(out) = spermidine(out) + n H(+)(in). The catalysed reaction is serotonin(in) + n H(+)(out) = serotonin(out) + n H(+)(in). In terms of biological role, proton-coupled polyamine antiporter involved in the translocation of polyamines from cytosol into secretory vesicles prior to their release via exocytosis. Uses the electrochemical proton gradient generated by a V-type proton-pumping ATPase to couple the efflux of protons with the uptake of a polyamine molecule. Facilitates vesicular storage of spermine and spermidine in astrocytes with an impact on glutamatergic neuronal transmission and memory formation. Upon antigen stimulation, regulates polyamine accumulation and release in mast cell secretory granules, which in turn potentiates mast cell degranulation and histamine secretion. This is MFS-type transporter SLC18B1 from Homo sapiens (Human).